The following is a 313-amino-acid chain: Kazal-type serine protease inhibitor domain-containing protein 1 (313 aa).

The N-terminal stretch at 1 to 37 (MPRVFTGLPANYAAPTLALSLLLPLLLVVWTQLPVSA) is a signal peptide. Residues 56–136 (EGEGCAPCRP…EVPEPLCVCR (81 aa)) enclose the IGFBP N-terminal domain. 7 disulfide bridges follow: C60-C83, C63-C85, C68-C86, C74-C89, C97-C115, C109-C133, and C142-C175. The region spanning 127–177 (EVPEPLCVCRSQRPLCGSDGRTYAQICRLQEAARARLDANLTVVHPGPCES) is the Kazal-like domain. N166 and N190 each carry an N-linked (GlcNAc...) asparagine glycan. The Ig-like C2-type domain maps to 179–276 (PQILSQPHNI…GQAEASATLT (98 aa)). An intrachain disulfide couples C200 to C260. N284 carries an N-linked (GlcNAc...) asparagine glycan. Residues 290 to 313 (QLQSRSLFPEEEEEAESEELGDYY) are disordered. Over residues 298–313 (PEEEEEAESEELGDYY) the composition is skewed to acidic residues.

As to expression, highly expressed in the spleen. Moderately expressed in the skin, lung and urinary bladder. Weakly expressed in the brain, tongue, esophagus, stomach, large intestine, liver and bone. Expressed in osteoblastic cells during bone regeneration. Expressed in secretory osteoblasts in the tooth.

It localises to the secreted. The protein resides in the extracellular space. Its subcellular location is the extracellular matrix. Involved in the proliferation of osteoblasts during bone formation and bone regeneration. Promotes matrix assembly. The protein is Kazal-type serine protease inhibitor domain-containing protein 1 (Kazald1) of Mus musculus (Mouse).